The sequence spans 201 residues: Adenylyl-sulfate kinase (201 aa).

An ATP-binding site is contributed by 35–42 (GLSGSGKS). The active-site Phosphoserine intermediate is the Ser109.

This sequence belongs to the APS kinase family.

The catalysed reaction is adenosine 5'-phosphosulfate + ATP = 3'-phosphoadenylyl sulfate + ADP + H(+). The protein operates within sulfur metabolism; hydrogen sulfide biosynthesis; sulfite from sulfate: step 2/3. Functionally, catalyzes the synthesis of activated sulfate. This Salmonella typhi protein is Adenylyl-sulfate kinase.